A 1010-amino-acid chain; its full sequence is 2-oxoglutarate dehydrogenase-like, mitochondrial (1010 aa).

A mitochondrion-targeting transit peptide spans 1–73 (MSQLRLLPSR…RSVHKSWDSF (73 aa)). Residues His130, Asp143, and Asp145 each contribute to the Ca(2+) site. The thiamine diphosphate site is built by Arg299, Asp398, Asn431, Ile433, and Gln663. 3 residues coordinate Mg(2+): Asp398, Asn431, and Ile433.

The protein belongs to the alpha-ketoglutarate dehydrogenase family. In terms of assembly, the OGDHC complex comprises multiple copies of three catalytic enzyme components, the 2-oxoglutarate dehydrogenase (OGDH/E1), the dihydrolipoamide dehydrogenase (DLST/E2) and the dihydrolipoamide dehydrogenase (DLD/E3). OGDHL/E1-like isoenzyme may replace OGDH in the OGDHC complex in the brain. The presence of either ODGH/E1 or ODGHL/E1-like isoenzyme in the complex may depend on its tissular distribution. The cofactor is thiamine diphosphate. It depends on Mg(2+) as a cofactor.

It is found in the mitochondrion matrix. It catalyses the reaction N(6)-[(R)-lipoyl]-L-lysyl-[protein] + 2-oxoglutarate + H(+) = N(6)-[(R)-S(8)-succinyldihydrolipoyl]-L-lysyl-[protein] + CO2. In terms of biological role, 2-oxoglutarate dehydrogenase (E1-like) component of the 2-oxoglutarate dehydrogenase multienzyme complex (OGDHC) which mediates the decarboxylation of alpha-ketoglutarate in the tricarboxylic acid cycle. The OGDHC complex catalyzes the overall conversion of 2-oxoglutarate to succinyl-CoA and CO(2) while reducing NAD(+) to NADH. The OGDHC complex is mainly active in the mitochondrion. Involved in the inhibition of cell proliferation and in apoptosis. This is 2-oxoglutarate dehydrogenase-like, mitochondrial (OGDHL) from Pongo abelii (Sumatran orangutan).